Consider the following 120-residue polypeptide: Photosystem II extrinsic protein U (120 aa).

Positions 1–29 (MKRLLSLLTGVLVMTGLLMALIFPQSAYA) are cleaved as a signal peptide.

It belongs to the PsbU family. As to quaternary structure, PSII is composed of 1 copy each of membrane proteins PsbA, PsbB, PsbC, PsbD, PsbE, PsbF, PsbH, PsbI, PsbJ, PsbK, PsbL, PsbM, PsbT, PsbX, PsbY, Psb30/Ycf12, peripheral proteins PsbO, CyanoQ (PsbQ), PsbU, PsbV and a large number of cofactors. It forms dimeric complexes.

The protein localises to the cellular thylakoid membrane. Functionally, one of the extrinsic, lumenal subunits of photosystem II (PSII). PSII is a light-driven water plastoquinone oxidoreductase, using light energy to abstract electrons from H(2)O, generating a proton gradient subsequently used for ATP formation. The extrinsic proteins stabilize the structure of photosystem II oxygen-evolving complex (OEC), the ion environment of oxygen evolution and protect the OEC against heat-induced inactivation. This is Photosystem II extrinsic protein U from Prochlorococcus marinus (strain MIT 9303).